The sequence spans 134 residues: Calcitonin gene-related peptide 2 (134 aa).

The N-terminal stretch at 1 to 26 (MDFWKFFPFLALSSMWVLCLASSLQA) is a signal peptide. The propeptide occupies 27–86 (APFRSALESSLDLGTLSDQEKHLLLAALIQDYEQKARKLEQEEQETEGSRKGSSSSVISQ). The disordered stretch occupies residues 65–91 (LEQEEQETEGSRKGSSSSVISQKRSCN). A compositionally biased stretch (low complexity) spans 77-89 (KGSSSSVISQKRS). Cysteines 90 and 95 form a disulfide. A Phenylalanine amide modification is found at phenylalanine 125. The propeptide occupies 131–134 (DLRV).

This sequence belongs to the calcitonin family.

The protein resides in the secreted. Its function is as follows. CALCB/CGRP2 is a peptide hormone that induces vasodilation mediated by the CALCRL-RAMP1 receptor complex. Dilates a variety of vessels including the coronary, cerebral and systemic vasculature. Its abundance in the CNS also points toward a neurotransmitter or neuromodulator role. This Rattus norvegicus (Rat) protein is Calcitonin gene-related peptide 2.